A 667-amino-acid chain; its full sequence is UvrABC system protein B (667 aa).

Positions 24–195 constitute a Helicase ATP-binding domain; the sequence is EGLRRGDRFQ…SSGGVFHLRG (172 aa). 37–44 serves as a coordination point for ATP; the sequence is GVTGSGKT. The Beta-hairpin motif lies at 90 to 113; the sequence is YYDYYQPEAYIPTKDLYIEKDADI. Positions 428–581 constitute a Helicase C-terminal domain; it reads QVDDFIEEVQ…QLMYNIEHDI (154 aa). Residues 626 to 661 enclose the UVR domain; it reads EEYLALLEEEMWRASSELRYEDAAMLRDEMLRIKRE.

This sequence belongs to the UvrB family. As to quaternary structure, forms a heterotetramer with UvrA during the search for lesions. Interacts with UvrC in an incision complex.

Its subcellular location is the cytoplasm. The UvrABC repair system catalyzes the recognition and processing of DNA lesions. A damage recognition complex composed of 2 UvrA and 2 UvrB subunits scans DNA for abnormalities. Upon binding of the UvrA(2)B(2) complex to a putative damaged site, the DNA wraps around one UvrB monomer. DNA wrap is dependent on ATP binding by UvrB and probably causes local melting of the DNA helix, facilitating insertion of UvrB beta-hairpin between the DNA strands. Then UvrB probes one DNA strand for the presence of a lesion. If a lesion is found the UvrA subunits dissociate and the UvrB-DNA preincision complex is formed. This complex is subsequently bound by UvrC and the second UvrB is released. If no lesion is found, the DNA wraps around the other UvrB subunit that will check the other stand for damage. This chain is UvrABC system protein B, found in Kosmotoga olearia (strain ATCC BAA-1733 / DSM 21960 / TBF 19.5.1).